A 319-amino-acid polypeptide reads, in one-letter code: L-lactate dehydrogenase 2 (319 aa).

NAD(+) contacts are provided by residues Val16, Asp37, Lys42, Tyr68, and 82–83; that span reads GA. 2 residues coordinate substrate: Gln85 and Arg91. NAD(+)-binding positions include Ser104, 121-123, and Ser146; that span reads AAN. 123–126 is a substrate binding site; the sequence is NPVD. Position 151-154 (151-154) interacts with substrate; sequence DSAR. The active-site Proton acceptor is His178. Tyr222 carries the post-translational modification Phosphotyrosine. Residue Thr231 participates in substrate binding.

Belongs to the LDH/MDH superfamily. LDH family. In terms of assembly, homotetramer.

Its subcellular location is the cytoplasm. It carries out the reaction (S)-lactate + NAD(+) = pyruvate + NADH + H(+). The protein operates within fermentation; pyruvate fermentation to lactate; (S)-lactate from pyruvate: step 1/1. Functionally, catalyzes the conversion of lactate to pyruvate (Potential). Contributes to S.aureus growth during nitrosative stress in both aerobically and anaerobically cultured cells, despite playing a secondary role in this resistance mechanism. The sequence is that of L-lactate dehydrogenase 2 from Staphylococcus aureus (strain USA300).